We begin with the raw amino-acid sequence, 237 residues long: DCN1-like protein 5 (237 aa).

Ser9, Ser41, and Ser48 each carry phosphoserine. The DCUN1 domain occupies 46–232 (FSSKKCLAWF…LLDEFVEWQK (187 aa)).

In terms of assembly, part of a complex that contains DCUN1D5, CUL1 and RBX1; this interaction is bridged by CUL1. Interacts (via the DCUN1 domain) with the unneddylated cullins: interacts with CUL1, CUL2, CUL3, CUL4A, CUL4B and CUL5; these interactions promote the cullin neddylation and the identity of the cullin dictates the affinity of the interaction. Interacts (via DCUN1 domain) with UBE2M (N-terminally acetylated form) and probably with UBE2F (N-terminally acetylated form). May also interact with regulators or subunits of cullin-RING ligases such as RBX1, RNF7, ELOB and DDB1; these interactions are bridged by cullins. Interacts with CAND1; this interaction is bridged by cullins and strongly inhibits the neddylation of cullins. These CAND-cullin-DCNL complexes can only be neddylated in the presence of a substrate adapter. Post-translationally, phosphorylation at Ser-41 is independent of cullin's interaction. Phosphorylated in response to both TICAM1 and MYD88 dependent Toll-like receptor (TLR) pathway activation. Phosphorylated in response to IL1B stimulation. Weakly expressed in testis, skin and immune tissues (thymus, spleen and lymph nodes).

Its subcellular location is the nucleus. The protein localises to the cytoplasm. It localises to the cytoskeleton. The protein resides in the spindle. In terms of biological role, contributes to the neddylation of all cullins by transferring NEDD8 from N-terminally acetylated NEDD8-conjugating E2s enzyme to different cullin C-terminal domain-RBX complexes which is necessary for the activation of cullin-RING E3 ubiquitin ligases (CRLs). May play a role in DNA damage response and may participate in cell proliferation and anchorage-independent cell growth. This chain is DCN1-like protein 5, found in Homo sapiens (Human).